The chain runs to 690 residues: Eukaryotic translation initiation factor 3 subunit B (690 aa).

The segment covering 1–11 has biased composition (basic and acidic residues); sequence MAKKKSEEHSG. A disordered region spans residues 1 to 36; that stretch reads MAKKKSEEHSGADANDSDYQEEPNFEDPPGFVDNIS. The span at 15 to 25 shows a compositional bias: acidic residues; sequence NDSDYQEEPNF. The 85-residue stretch at 57-141 folds into the RRM domain; it reads SVVVVDNIPK…HTFAVNLFTD (85 aa). 5 WD repeats span residues 207-246, 293-331, 334-369, 442-484, and 530-575; these read TRERFTDTFVKWSPLGTYVVTFHKPGVAIWGGSSFQKIQK, DGMSVLSMFRWSHDDKFVARMGENSIHIYETPSFFLLDL, IKIPGIRGFSWSPTDNVIAYWVEEQNQIPARVTLME, EIRE…KPSL, and PDHF…IKRT. Positions 595–645 form a coiled coil; it reads EEKQKEIKKNLKKYYAAFEQKDRLRLTRASKELLEKRSQLRETFMEYRNKR.

It belongs to the eIF-3 subunit B family. In terms of assembly, component of the eukaryotic translation initiation factor 3 (eIF-3) complex. The eIF-3 complex interacts with pix. Interacts with mxt.

It localises to the cytoplasm. Its function is as follows. RNA-binding component of the eukaryotic translation initiation factor 3 (eIF-3) complex, which is involved in protein synthesis of a specialized repertoire of mRNAs and, together with other initiation factors, stimulates binding of mRNA and methionyl-tRNAi to the 40S ribosome. The eIF-3 complex specifically targets and initiates translation of a subset of mRNAs involved in cell proliferation. The chain is Eukaryotic translation initiation factor 3 subunit B from Drosophila yakuba (Fruit fly).